The sequence spans 132 residues: MTMTDPIADMLTRLRNANSAYHDTVSMPYSKLKSHIAEILQAEGYITSWTVEDAEVGKKLTLDLKFGPNRERAIAGLRRVSKPGLRVYAKSTNLPRVLGGLGVAILSTSSGLLTDKQANKKGVGGEVLAYVW.

It belongs to the universal ribosomal protein uS8 family. As to quaternary structure, part of the 30S ribosomal subunit. Contacts proteins S5 and S12.

Functionally, one of the primary rRNA binding proteins, it binds directly to 16S rRNA central domain where it helps coordinate assembly of the platform of the 30S subunit. In Kineococcus radiotolerans (strain ATCC BAA-149 / DSM 14245 / SRS30216), this protein is Small ribosomal subunit protein uS8.